A 567-amino-acid polypeptide reads, in one-letter code: Lipase maturation factor 1 (567 aa).

The interval 1–39 (MRPDSPTMAAPAESLRRRKTGYSDPEPESPPAPGRGPAG) is disordered. The Cytoplasmic portion of the chain corresponds to 1 to 49 (MRPDSPTMAAPAESLRRRKTGYSDPEPESPPAPGRGPAGSPAHLHTGTF). A helical membrane pass occupies residues 50–72 (WLTRIVLLKALAFVYFVAFLVAF). Residues 73–127 (HQNKQLIGDRGLLPCRVFLKNFQQYFQDRTSWEVFSYMPTILWLMDWSDMNSNLD) are Lumenal-facing. The helical transmembrane segment at 128 to 151 (LLALLGLGISSFVLITGCANMLLM) threads the bilayer. Residues 152-207 (AALWGLYMSLVNVGHVWYSFGWESQLLETGFLGIFLCPLWTLSRLPQHTPTSRIVL) are Cytoplasmic-facing. The helical transmembrane segment at 208 to 221 (WGFRWLIFRIMLGA) threads the bilayer. Over 222–292 (GLIKIRGDRC…LGRRACIIHG (71 aa)) the chain is Lumenal. The helical transmembrane segment at 293 to 321 (VLQILFQAVLIVSGNLSFLNWLTMVPSLA) threads the bilayer. The Cytoplasmic portion of the chain corresponds to 322 to 367 (CFDDATLGFLFPSGPGSLKDRVLQMQRDIRGARPEPRFGSVVRRAA). A helical membrane pass occupies residues 368-388 (NVSLGVLLAWLSVPVVLNLLS). Over 389-567 (SRQVMNTHFN…DRGWPLPGPL (179 aa)) the chain is Lumenal.

It belongs to the lipase maturation factor family. Interacts with LPL and SEL1L.

The protein resides in the endoplasmic reticulum membrane. Involved in the maturation of specific proteins in the endoplasmic reticulum. Required for maturation and transport of active lipoprotein lipase (LPL) through the secretory pathway. Each LMF1 molecule chaperones 50 or more molecules of LPL. The chain is Lipase maturation factor 1 (LMF1) from Homo sapiens (Human).